The primary structure comprises 158 residues: S-ribosylhomocysteine lyase (158 aa).

3 residues coordinate Fe cation: H54, H58, and C124.

It belongs to the LuxS family. Homodimer. Fe cation serves as cofactor.

It catalyses the reaction S-(5-deoxy-D-ribos-5-yl)-L-homocysteine = (S)-4,5-dihydroxypentane-2,3-dione + L-homocysteine. Its function is as follows. Involved in the synthesis of autoinducer 2 (AI-2) which is secreted by bacteria and is used to communicate both the cell density and the metabolic potential of the environment. The regulation of gene expression in response to changes in cell density is called quorum sensing. Catalyzes the transformation of S-ribosylhomocysteine (RHC) to homocysteine (HC) and 4,5-dihydroxy-2,3-pentadione (DPD). This is S-ribosylhomocysteine lyase from Limosilactobacillus reuteri (Lactobacillus reuteri).